Here is a 428-residue protein sequence, read N- to C-terminus: Histidine--tRNA ligase (428 aa).

This sequence belongs to the class-II aminoacyl-tRNA synthetase family. In terms of assembly, homodimer.

The protein localises to the cytoplasm. It catalyses the reaction tRNA(His) + L-histidine + ATP = L-histidyl-tRNA(His) + AMP + diphosphate + H(+). The sequence is that of Histidine--tRNA ligase from Lactobacillus helveticus (strain DPC 4571).